The sequence spans 192 residues: Elongation factor P (192 aa).

The protein belongs to the elongation factor P family.

The protein resides in the cytoplasm. The protein operates within protein biosynthesis; polypeptide chain elongation. In terms of biological role, involved in peptide bond synthesis. Stimulates efficient translation and peptide-bond synthesis on native or reconstituted 70S ribosomes in vitro. Probably functions indirectly by altering the affinity of the ribosome for aminoacyl-tRNA, thus increasing their reactivity as acceptors for peptidyl transferase. In Borreliella burgdorferi (strain ATCC 35210 / DSM 4680 / CIP 102532 / B31) (Borrelia burgdorferi), this protein is Elongation factor P (efp).